The sequence spans 357 residues: (+)-eremophilene synthase (357 aa).

Residues Asp-100 and Glu-105 each contribute to the Mg(2+) site. A DDXXE motif motif is present at residues 100-105 (DDDFDE). Arg-198 contributes to the substrate binding site. Mg(2+) is bound by residues Asn-244 and Ser-248. Lys-251 contacts substrate. Asp-252 contacts Mg(2+). 331 to 332 (RY) is a substrate binding site.

It belongs to the terpene synthase family. Mg(2+) is required as a cofactor.

It catalyses the reaction (2E,6E)-farnesyl diphosphate = (+)-eremophilene + diphosphate. It participates in secondary metabolite biosynthesis; terpenoid biosynthesis. Its function is as follows. Catalyzes the conversion of (2E,6E)-farnesyl diphosphate (FPP) to yield the bicyclic sesquiterpene eremophilene via a 1,10-cyclization, which requires the abstraction of the pyrophosphate from FPP to yield the (E,E)-germacradienyl cation. The only accepted substrate is farnesyl diphosphate (FPP). In Gibberella fujikuroi (strain CBS 195.34 / IMI 58289 / NRRL A-6831) (Bakanae and foot rot disease fungus), this protein is (+)-eremophilene synthase.